The primary structure comprises 609 residues: Glutamine--fructose-6-phosphate aminotransferase [isomerizing] (609 aa).

Residue Cys-2 is the Nucleophile; for GATase activity of the active site. The 218-residue stretch at 2 to 219 folds into the Glutamine amidotransferase type-2 domain; sequence CGIFGYLGSK…SGELAIVGLG (218 aa). SIS domains lie at 280-426 and 458-599; these read ISEK…SKHT and WAHT…IDCP. Lys-604 (for Fru-6P isomerization activity) is an active-site residue.

In terms of assembly, homodimer.

The protein resides in the cytoplasm. It catalyses the reaction D-fructose 6-phosphate + L-glutamine = D-glucosamine 6-phosphate + L-glutamate. In terms of biological role, catalyzes the first step in hexosamine metabolism, converting fructose-6P into glucosamine-6P using glutamine as a nitrogen source. The protein is Glutamine--fructose-6-phosphate aminotransferase [isomerizing] of Chlamydia abortus (strain DSM 27085 / S26/3) (Chlamydophila abortus).